We begin with the raw amino-acid sequence, 317 residues long: Methionyl-tRNA formyltransferase (317 aa).

(6S)-5,6,7,8-tetrahydrofolate is bound at residue Ser112–Pro115.

It belongs to the Fmt family.

It carries out the reaction L-methionyl-tRNA(fMet) + (6R)-10-formyltetrahydrofolate = N-formyl-L-methionyl-tRNA(fMet) + (6S)-5,6,7,8-tetrahydrofolate + H(+). In terms of biological role, attaches a formyl group to the free amino group of methionyl-tRNA(fMet). The formyl group appears to play a dual role in the initiator identity of N-formylmethionyl-tRNA by promoting its recognition by IF2 and preventing the misappropriation of this tRNA by the elongation apparatus. The protein is Methionyl-tRNA formyltransferase of Mycobacterium avium (strain 104).